The chain runs to 47 residues: DSRGTQLHRALRKATILSVSARCKLSGYRCKRPKQCCNLSCGNYMCG.

The propeptide occupies 1–22 (DSRGTQLHRALRKATILSVSAR). 3 disulfides stabilise this stretch: Cys23-Cys37, Cys30-Cys41, and Cys36-Cys46. Residue Cys46 is modified to Cysteine amide.

Belongs to the conotoxin O1 superfamily. Expressed by the venom duct.

The protein localises to the secreted. In Conus bullatus (Bubble cone), this protein is Conotoxin Bu10.